A 187-amino-acid chain; its full sequence is CASP-like protein 3A2 (187 aa).

Topologically, residues 1 to 24 are cytoplasmic; sequence MTSNGEGGEVVAKRRRKGIKELVQ. A helical membrane pass occupies residues 25 to 45; sequence VALRGGCLAASATAMAVMLTA. Residues 46 to 71 lie on the Extracellular side of the membrane; the sequence is TEEGVADIYGFKLTLSSNWSFSPSYQ. N-linked (GlcNAc...) asparagine glycosylation is present at N63. The helical transmembrane segment at 72-92 threads the bilayer; it reads YVVGACAGTVLYSLLQLCLGV. At 93–107 the chain is on the cytoplasmic side; that stretch reads YRLVTGSPITPSRFQ. Residues 108-128 traverse the membrane as a helical segment; sequence AWLCFTSDQLFCYLMMSAGSA. Over 129–162 the chain is Extracellular; that stretch reads GSGVTNLNKTGIRHTPLPDFCKTLSSFCNHVALS. Residue N136 is glycosylated (N-linked (GlcNAc...) asparagine). Residues 163-183 form a helical membrane-spanning segment; that stretch reads LLLVFLSFIFLASSSFFTVLV. Residues 184–187 are Cytoplasmic-facing; sequence LSTP.

The protein belongs to the Casparian strip membrane proteins (CASP) family. As to quaternary structure, homodimer and heterodimers.

The protein localises to the cell membrane. The polypeptide is CASP-like protein 3A2 (Arabidopsis thaliana (Mouse-ear cress)).